Consider the following 461-residue polypeptide: Asparagine--tRNA ligase (461 aa).

Belongs to the class-II aminoacyl-tRNA synthetase family. As to quaternary structure, homodimer.

The protein resides in the cytoplasm. It catalyses the reaction tRNA(Asn) + L-asparagine + ATP = L-asparaginyl-tRNA(Asn) + AMP + diphosphate + H(+). The chain is Asparagine--tRNA ligase from Geobacter sulfurreducens (strain ATCC 51573 / DSM 12127 / PCA).